The chain runs to 990 residues: Fibronectin-binding protein A (990 aa).

The N-terminal stretch at 1-35 is a signal peptide; sequence MKNNLRYGIRKHKLGAASVFLGTMIVVGMGQDKEA. The short motif at 7–18 is the YSIRK-G/S signaling motif element; it reads YGIRKHKLGAAS. Disordered stretches follow at residues 33-61 and 96-193; these read KEAA…SETQ and PKAV…TEVK. The segment covering 37 to 55 has biased composition (polar residues); sequence TSEQKTTTVEENGNSATDN. Residues 37–511 form a ligand-binding A region region; the sequence is TSEQKTTTVE…SNKADGNGKN (475 aa). 2 stretches are compositionally biased toward basic and acidic residues: residues 112–126 and 179–193; these read TVKE…KPQV and DVAE…TEVK. The segment at 194–511 is fibrinogen/elastin/tropoelastin-binding; sequence GTDVTSKVTV…SNKADGNGKN (318 aa). The interval 512-834 is fibronectin-binding; it reads GQIIQNNDFE…EGQQTIEEDT (323 aa). A B-1 repeat occupies 545 to 574; that stretch reads ENQDNTPLDIDYHTAIDGEGGYADGYIETI. The interval 545–604 is 2 X approximate tandem repeats; that stretch reads ENQDNTPLDIDYHTAIDGEGGYADGYIETIEETDSSAIDIDYHTAVDSEAGHVGGYTESS. One copy of the B-2 repeat lies at 575 to 604; sequence EETDSSAIDIDYHTAVDSEAGHVGGYTESS. A disordered region spans residues 702–969; sequence LGYEGGQNSG…EESTNKGMLF (268 aa). The stretch at 707–744 is one D-1 repeat; sequence GQNSGNQSFEEDTEEDKPKYEQGGNIVDIDFDSVPQIQ. Residues 707-850 form a 4 X approximate tandem repeats region; sequence GQNSGNQSFE…TPEVPSEPET (144 aa). Residues 741-752 are compositionally biased toward polar residues; the sequence is PQIQGQNNGNQS. A D-2 repeat occupies 745–782; sequence GQNNGNQSFEEDTEKDKPKYEQGGNIIDIDFDSVPQIH. The stretch at 783–821 is one D-3 repeat; the sequence is GFNKHNEIIEEDTNKDKPNYQFGGHNSVDFEEDTLPKVS. Basic and acidic residues predominate over residues 786-800; sequence KHNEIIEEDTNKDKP. One copy of the D-4; truncated repeat lies at 822–850; the sequence is GQNEGQQTIEEDTTPPTPPTPEVPSEPET. A compositionally biased stretch (pro residues) spans 836–910; the sequence is PPTPPTPEVP…PAEPGKPVPP (75 aa). WR repeat units lie at residues 851-864, 865-878, 879-892, 893-906, and 907-920; these read PTPP…EPET, PTPP…EPGK, and PVPP…KPSK. A 5 X tandem repeats, Pro-rich (WR) region spans residues 851-920; the sequence is PTPPTPEVPS…AEEEPKKPSK (70 aa). The LPXTG sorting signal signature appears at 954 to 958; it reads LPETG. A Pentaglycyl murein peptidoglycan amidated threonine modification is found at threonine 957. Positions 958–990 are cleaved as a propeptide — removed by sortase; it reads GGEESTNKGMLFGGLFSILGLALLRRNKKNHKA.

The protein resides in the secreted. It is found in the cell wall. In terms of biological role, promotes bacterial attachment to multiple substrates, such as fibronectin (Fn), fibrinogen (Fg), elastin peptides and tropoelastin. This confers to S.aureus the ability to invade endothelial cells. Promotes adherence to and aggregation of activated platelets. In Staphylococcus aureus (strain bovine RF122 / ET3-1), this protein is Fibronectin-binding protein A (fnbA).